The primary structure comprises 386 residues: Paralemmin-1 (386 aa).

Residues 4–115 (VEANTLQQER…TKENLAEAAA (112 aa)) adopt a coiled-coil conformation. 4 disordered regions span residues 21–40 (RKRQ…DRRQ), 51–149 (ERWL…PMKA), 240–290 (EATA…TMIF), and 321–378 (DAES…AKKQ). 2 stretches are compositionally biased toward basic and acidic residues: residues 24–40 (QTEI…DRRQ) and 68–95 (AMKK…RELE). Residues 97-116 (LENSSSVTSTKENLAEAAAP) show a composition bias toward low complexity. Basic and acidic residues-rich tracts occupy residues 259-282 (PRRE…EPSR), 322-334 (AESK…KDHA), and 365-377 (EAKE…DAKK). Residues cysteine 380 and cysteine 382 are each lipidated (S-palmitoyl cysteine). Cysteine 383 is subject to Cysteine methyl ester. The S-farnesyl cysteine moiety is linked to residue cysteine 383. Residues 384 to 386 (TVM) constitute a propeptide, removed in mature form.

The protein belongs to the paralemmin family. As to quaternary structure, interacts with dopamine receptor DRD3. Phosphorylated. In terms of tissue distribution, expressed in the lens (at protein level). Highly expressed in forebrain and cerebellum with lower expression in adrenal gland and heart. Expression weak or undetectable in other tissues.

The protein localises to the cell membrane. Its subcellular location is the cell projection. It localises to the filopodium membrane. The protein resides in the axon. It is found in the dendrite. The protein localises to the dendritic spine. Its subcellular location is the basolateral cell membrane. It localises to the apicolateral cell membrane. In terms of biological role, involved in plasma membrane dynamics and cell process formation. Isoform 1 and isoform 2 are necessary for axonal and dendritic filopodia induction, for dendritic spine maturation and synapse formation in a palmitoylation-dependent manner. The polypeptide is Paralemmin-1 (PALM) (Gallus gallus (Chicken)).